A 259-amino-acid chain; its full sequence is ATP synthase subunit a (259 aa).

Positions 1-7 are cleaved as a propeptide — removed in mature form; the sequence is MTNNYIN. The next 5 membrane-spanning stretches (helical) occupy residues 36–56, 95–115, 125–145, 164–206, and 211–253; these read FSLYTLFVVLVISLTFILSIG, YVPLVYTLFTFILVANLIGMV, LIYIIGISVSLWIGLTILGLF, LVPV…NLVK, and INYF…SYLK.

As to quaternary structure, F-type ATP synthases have 2 components, the catalytic core F(1) and the membrane-embedded component F(0), linked together by a central stalk and a peripheral stalk. The central stalk, also called rotor shaft, is often seen as part of F(1). The peripheral stalk is seen as part of F(0). F(0) contains the membrane channel next to the rotor. F-type ATP synthases form dimers but each monomer functions independently in ATP generation. The dimer consists of 18 different polypeptides: ATP1 (subunit alpha, part of F(1), 3 molecules per monomer), ATP2 (subunit beta, part of F(1), 3 molecules per monomer), ATP3 (subunit gamma, part of the central stalk), ATP4 (subunit b, part of the peripheral stalk), ATP5/OSCP (subunit 5/OSCP, part of the peripheral stalk), ATP6 (subunit a, part of the peripheral stalk), ATP7 (subunit d, part of the peripheral stalk), ATP8 (subunit 8, part of the peripheral stalk), OLI1 (subunit c, part of the rotor, 10 molecules per monomer), ATP14 (subunit h, part of the peripheral stalk), ATP15 (subunit epsilon, part of the central stalk), ATP16 (subunit delta, part of the central stalk), ATP17 (subunit f, part of the peripheral stalk), ATP18 (subunit i/j, part of the peripheral stalk). Dimer-specific subunits are ATP19 (subunit k, at interface between monomers), ATP20 (subunit g, at interface between monomers), TIM11 (subunit e, at interface between monomers). Also contains subunit L.

It localises to the mitochondrion inner membrane. Functionally, mitochondrial membrane ATP synthase (F(1)F(0) ATP synthase or Complex V) produces ATP from ADP in the presence of a proton gradient across the membrane which is generated by electron transport complexes of the respiratory chain. F-type ATP synthases consist of two structural domains, F(1) - containing the extramembraneous catalytic core, and F(0) - containing the membrane proton channel, linked together by a central stalk and a peripheral stalk. During catalysis, ATP synthesis in the catalytic domain of F(1) is coupled via a rotary mechanism of the central stalk subunits to proton translocation. Key component of the proton channel; it may play a direct role in the translocation of protons across the membrane. The sequence is that of ATP synthase subunit a from Pichia angusta (Yeast).